The chain runs to 143 residues: Larval cuticle protein LCP-17 (143 aa).

A signal peptide spans 1–16 (MKFLIVLAVAVACASA). A Chitin-binding type R&amp;R domain is found at 41–110 (EGHFQFNYET…PQGSHLPTPH (70 aa)).

In terms of biological role, component of the cuticle of the larva of Bombyx mori. The polypeptide is Larval cuticle protein LCP-17 (LCP17) (Bombyx mori (Silk moth)).